We begin with the raw amino-acid sequence, 115 residues long: MARVKRGNIARKRRNKILNLAKGFRGGNKNLFRTANQRVMKALCNAYRDRRRRKRDFRRLWIARINASARINGTNYSKLINGLKTSEIIINRKMLAQLALNDPQSFEKIVSAVSK.

It belongs to the bacterial ribosomal protein bL20 family.

In terms of biological role, binds directly to 23S ribosomal RNA and is necessary for the in vitro assembly process of the 50S ribosomal subunit. It is not involved in the protein synthesizing functions of that subunit. The protein is Large ribosomal subunit protein bL20 of Prochlorococcus marinus (strain MIT 9515).